A 2280-amino-acid polypeptide reads, in one-letter code: Protein Ycf2 (2280 aa).

Position 1631–1638 (1631–1638) interacts with ATP; it reads GSIGTGRS.

Belongs to the Ycf2 family.

The protein resides in the plastid. It localises to the chloroplast stroma. Its function is as follows. Probable ATPase of unknown function. Its presence in a non-photosynthetic plant (Epifagus virginiana) and experiments in tobacco indicate that it has an essential function which is probably not related to photosynthesis. In Nicotiana tabacum (Common tobacco), this protein is Protein Ycf2 (ycf2-A).